A 358-amino-acid chain; its full sequence is Psilocybin cluster transcription regulator (358 aa).

2 disordered regions span residues 1–40 (MAPA…IAGM) and 62–212 (SGGK…RRRR). The span at 18 to 29 (PPAPGAPAPANA) shows a compositional bias: pro residues. The segment covering 79 to 91 (QTLSNLAQAQPYG) has biased composition (polar residues). Low complexity predominate over residues 179–190 (PTTGRRGGRSAT). Over residues 195-209 (EWSRQRKDNHKEVER) the composition is skewed to basic and acidic residues. The basic motif stretch occupies residues 199–212 (QRKDNHKEVERRRR). Positions 199-249 (QRKDNHKEVERRRRGNINEGINELGRIVPSGSGEKAKGAILSRAVQYIHHL) constitute a bHLH domain. The interval 213–249 (GNINEGINELGRIVPSGSGEKAKGAILSRAVQYIHHL) is helix-loop-helix motif. A coiled-coil region spans residues 264 to 306 (KLLMDQAMGDLQAQLEEVKRLWEEERMARTRLEAELEVLRNMN). The interval 308–358 (VNAGSAPASKDESAAGTKRRSTDGAEAATAATESSTANAEGERDGKRQRTE) is disordered. The span at 331-346 (GAEAATAATESSTANA) shows a compositional bias: low complexity. Positions 347 to 358 (EGERDGKRQRTE) are enriched in basic and acidic residues.

The protein resides in the nucleus. Transcription factor that may regulate the expression of the gene cluster that mediates the biosynthesis of psilocybin, a psychotropic tryptamine-derived natural product. The polypeptide is Psilocybin cluster transcription regulator (Psilocybe cubensis (Psychedelic mushroom)).